A 344-amino-acid chain; its full sequence is S-adenosylmethionine:tRNA ribosyltransferase-isomerase (344 aa).

Belongs to the QueA family. In terms of assembly, monomer.

Its subcellular location is the cytoplasm. The enzyme catalyses 7-aminomethyl-7-carbaguanosine(34) in tRNA + S-adenosyl-L-methionine = epoxyqueuosine(34) in tRNA + adenine + L-methionine + 2 H(+). It functions in the pathway tRNA modification; tRNA-queuosine biosynthesis. Its function is as follows. Transfers and isomerizes the ribose moiety from AdoMet to the 7-aminomethyl group of 7-deazaguanine (preQ1-tRNA) to give epoxyqueuosine (oQ-tRNA). The protein is S-adenosylmethionine:tRNA ribosyltransferase-isomerase of Pediococcus pentosaceus (strain ATCC 25745 / CCUG 21536 / LMG 10740 / 183-1w).